A 430-amino-acid chain; its full sequence is Trigger factor (430 aa).

Positions 163 to 248 (GDVVDVDYKG…LNSIKTSILP (86 aa)) constitute a PPIase FKBP-type domain.

It belongs to the FKBP-type PPIase family. Tig subfamily.

Its subcellular location is the cytoplasm. The catalysed reaction is [protein]-peptidylproline (omega=180) = [protein]-peptidylproline (omega=0). In terms of biological role, involved in protein export. Acts as a chaperone by maintaining the newly synthesized protein in an open conformation. Functions as a peptidyl-prolyl cis-trans isomerase. This Lawsonia intracellularis (strain PHE/MN1-00) protein is Trigger factor.